A 1179-amino-acid chain; its full sequence is Calcium-activated potassium channel subunit alpha-1 (1179 aa).

Positions 1 to 24 (MANGGGGGGGSSGGGGGGGGGGSG) are enriched in gly residues. The segment at 1-62 (MANGGGGGGG…SSSSSSSSSV (62 aa)) is disordered. Over 1–87 (MANGGGGGGG…VPCDSRGQRM (87 aa)) the chain is Extracellular. The span at 41 to 61 (SSSSSSSSSSSSSSSSSSSSS) shows a compositional bias: low complexity. A helical transmembrane segment spans residues 88–108 (WWAFLASSMVTFFGGLFIILL). Topologically, residues 109-179 (WRTLKYLWTV…MISAQTLTGR (71 aa)) are cytoplasmic. S-palmitoyl cysteine attachment occurs at residues Cys119, Cys120, and Cys122. The helical transmembrane segment at 180-200 (VLVVLVFALSIGALVIYFIDS) threads the bilayer. Over 201-215 (SNPIESCQNFYKDFT) the chain is Extracellular. The helical transmembrane segment at 216 to 236 (LQIDMAFNVFFLLYFGLRFIA) threads the bilayer. Over 237–240 (ANDK) the chain is Cytoplasmic. Residues 241 to 261 (LWFWLEVNSVVDFFTVPPVFV) traverse the membrane as a helical segment. Residues 262-265 (SVYL) are Extracellular-facing. A helical; Voltage-sensor membrane pass occupies residues 266-286 (NRSWLGLRFLRALRLIQFSEI). At 287 to 301 (LQFLNILKTSNSIKL) the chain is on the cytoplasmic side. Residues 302–322 (VNLLSIFISTWLTAAGFIHLV) traverse the membrane as a helical segment. The Extracellular portion of the chain corresponds to 323-336 (ENSGDPWENFQNNQ). An intramembrane region (pore-forming) is located at residues 337 to 359 (ALTYWECVYLLMVTMSTVGYGDV). The Selectivity for potassium signature appears at 353–356 (TVGY). Topologically, residues 360-368 (YAKTTLGRL) are extracellular. The chain crosses the membrane as a helical span at residues 369–389 (FMVFFILGGLAMFASYVPEII). The Cytoplasmic segment spans residues 390–1179 (ELIGNRKKYG…KQKYVQEERL (790 aa)). An RCK N-terminal 1 domain is found at 408–550 (RKHIVVCGHI…WNWKEGDDAI (143 aa)). Mg(2+) contacts are provided by Glu440, Gln463, and Glu465. The tract at residues 557–577 (LGFIAQSCLAQGLSTMLANLF) is segment S7. Residues 614–634 (LSFPTVCELCFVKLKLLMIAI) form a segment S8 region. The heme-binding motif stretch occupies residues 678 to 682 (CKACH). The tract at residues 702-730 (EQPSTLSPKKKQRNGGMRNSPNSSPKLMR) is disordered. Thr706 bears the Phosphothreonine mark. Phosphoserine is present on residues Ser708, Ser721, and Ser725. The interval 780–800 (VLSGHVVVCIFGDVSSALIGL) is segment S9. One can recognise an RCK N-terminal 2 domain in the interval 782–926 (SGHVVVCIFG…MDRSSPDNSP (145 aa)). At Thr913 the chain carries Phosphothreonine. Ser921 and Ser925 each carry phosphoserine. Positions 946–968 (TELVNDTNVQFLDQDDDDDPDTE) match the Calcium bowl motif. 4 residues coordinate Ca(2+): Gln955, Asp958, Asp961, and Asp963. The tract at residues 975–995 (FACGTAFAVSVLDSLMSATYF) is segment S10. The segment covering 1129–1154 (RASLSHSSHSSQSSSKKSSSVHSIPS) has biased composition (low complexity). The tract at residues 1129–1179 (RASLSHSSHSSQSSSKKSSSVHSIPSTANRQNRPKSRESRDKQKYVQEERL) is disordered. Basic and acidic residues predominate over residues 1163-1179 (KSRESRDKQKYVQEERL). Ser1164 and Ser1167 each carry phosphoserine.

Belongs to the potassium channel family. Calcium-activated (TC 1.A.1.3) subfamily. KCa1.1/KCNMA1 sub-subfamily. As to quaternary structure, homotetramer; which constitutes the calcium-activated potassium channel. Interacts with beta subunits KCNMB1, KCNMB2, KCNMB3 and KCNMB4. Interacts with gamma subunits LRRC26, LRRC38, LRRC52 and LRRC55. Beta and gamma subunits are accessory, and modulate its activity. Interacts with RAB11B. In terms of processing, phosphorylated. Phosphorylation by kinases such as PKA and/or PKG. In smooth muscles, phosphorylation affects its activity. Post-translationally, palmitoylation by ZDHHC22 and ZDHHC23 within the intracellular linker between the S0 and S1 transmembrane domains regulates localization to the plasma membrane. Depalmitoylated by LYPLA1 and LYPLAL1, leading to retard exit from the trans-Golgi network.

The protein localises to the cell membrane. The protein resides in the endoplasmic reticulum membrane. The enzyme catalyses K(+)(in) = K(+)(out). Its activity is regulated as follows. Ethanol and carbon monoxide-bound heme increase channel activation. Heme inhibits channel activation. Functionally, potassium channel activated by both membrane depolarization or increase in cytosolic Ca(2+) that mediates export of K(+). It is also activated by the concentration of cytosolic Mg(2+). Its activation dampens the excitatory events that elevate the cytosolic Ca(2+) concentration and/or depolarize the cell membrane. It therefore contributes to repolarization of the membrane potential. Plays a key role in controlling excitability in a number of systems, such as regulation of the contraction of smooth muscle, the tuning of hair cells in the cochlea, regulation of transmitter release, and innate immunity. In smooth muscles, its activation by high level of Ca(2+), caused by ryanodine receptors in the sarcoplasmic reticulum, regulates the membrane potential. In cochlea cells, its number and kinetic properties partly determine the characteristic frequency of each hair cell and thereby helps to establish a tonotopic map. Kinetics of KCNMA1 channels are determined by alternative splicing, phosphorylation status and its combination with modulating beta subunits. Highly sensitive to both iberiotoxin (IbTx) and charybdotoxin (CTX). In terms of biological role, potassium channel activated by both membrane depolarization or increase in cytosolic Ca(2+) that mediates export of K(+). This Oryctolagus cuniculus (Rabbit) protein is Calcium-activated potassium channel subunit alpha-1 (KCNMA1).